A 172-amino-acid chain; its full sequence is Adenine phosphoribosyltransferase (172 aa).

The protein belongs to the purine/pyrimidine phosphoribosyltransferase family. As to quaternary structure, homodimer.

Its subcellular location is the cytoplasm. It catalyses the reaction AMP + diphosphate = 5-phospho-alpha-D-ribose 1-diphosphate + adenine. Its pathway is purine metabolism; AMP biosynthesis via salvage pathway; AMP from adenine: step 1/1. Catalyzes a salvage reaction resulting in the formation of AMP, that is energically less costly than de novo synthesis. In Staphylococcus aureus (strain bovine RF122 / ET3-1), this protein is Adenine phosphoribosyltransferase.